The following is a 240-amino-acid chain: 26.7 kDa heat shock protein, chloroplastic (240 aa).

The N-terminal 43 residues, 1-43 (MAAPFALVSRVSPAARLPIRAAWRRARPTVGLPSSGRARQLAV), are a transit peptide targeting the chloroplast. The interval 59-84 (HVNQDGGNQQGNAVQRRPRRSSALDG) is disordered. The 115-residue stretch at 126-240 (LATGEVRMPW…ERKVIDVQVQ (115 aa)) folds into the sHSP domain.

This sequence belongs to the small heat shock protein (HSP20) family. May form oligomeric structures. As to expression, expressed in roots, stems, leaves, spikelets and embryos.

The protein resides in the plastid. It is found in the chloroplast. The chain is 26.7 kDa heat shock protein, chloroplastic (HSP26.7) from Oryza sativa subsp. japonica (Rice).